Reading from the N-terminus, the 347-residue chain is Olfactory receptor 13C3 (347 aa).

Topologically, residues 1–55 (MIVQLICTVCFLAVNTFHVRSSFDFLKADDMGEINQTLVSEFLLLGLSGYPKIEI) are extracellular. A glycan (N-linked (GlcNAc...) asparagine) is linked at Asn-35. A helical transmembrane segment spans residues 56–76 (VYFALILVMYLVILIGNGVLI). The Cytoplasmic portion of the chain corresponds to 77–84 (IASIFDSH). A helical transmembrane segment spans residues 85 to 105 (FHTPMYFFLGNLSFLDICYTS). Residues 106-129 (SSVPSTLVSLISKKRNISFSGCAV) are Extracellular-facing. Cys-127 and Cys-219 are joined by a disulfide. A helical membrane pass occupies residues 130-150 (QMFFGFAMGSTECLLLGMMAF). The Cytoplasmic portion of the chain corresponds to 151 to 169 (DRYVAICNPLRYPIILSKV). A helical transmembrane segment spans residues 170–190 (AYVLMASVSWLSGGINSAVQT). The Extracellular segment spans residues 191-227 (LLAMRLPFCGNNIINHFACEILAVLKLACADISLNII). A helical transmembrane segment spans residues 228 to 247 (TMVISNMAFLVLPLMVIFFS). Residues 248–267 (YMFILYTILQMNSATGRRKA) lie on the Cytoplasmic side of the membrane. Residues 268 to 288 (FSTCSAHLTVVIIFYGTIFFM) form a helical membrane-spanning segment. Topologically, residues 289–307 (YAKPKSQDLIGEEKLQALD) are extracellular. Residues 308-328 (KLISLFYGVVTPMLNPILYSL) form a helical membrane-spanning segment. Residues 329–347 (RNKDVKAAVKYLLNKKPIH) are Cytoplasmic-facing.

It belongs to the G-protein coupled receptor 1 family.

The protein localises to the cell membrane. Odorant receptor. The sequence is that of Olfactory receptor 13C3 (OR13C3) from Homo sapiens (Human).